The primary structure comprises 566 residues: Urease subunit alpha 2 (566 aa).

A Urease domain is found at Gly128–Phe566. His133, His135, and Lys216 together coordinate Ni(2+). The residue at position 216 (Lys216) is an N6-carboxylysine. Residue His218 participates in substrate binding. Ni(2+) contacts are provided by His245 and His271. His319 acts as the Proton donor in catalysis. Asp359 serves as a coordination point for Ni(2+).

It belongs to the metallo-dependent hydrolases superfamily. Urease alpha subunit family. In terms of assembly, may form a heterohexamer of 3 UreC (alpha) and 3 UreAB (gamma/beta) subunits. May also form a heterotrimer of UreA (gamma), UreB (beta) and UreC (alpha) subunits. Three heterotrimers associate to form the active enzyme. Requires Ni cation as cofactor. Post-translationally, carboxylation allows a single lysine to coordinate two nickel ions.

The protein localises to the cytoplasm. The catalysed reaction is urea + 2 H2O + H(+) = hydrogencarbonate + 2 NH4(+). Its pathway is nitrogen metabolism; urea degradation; CO(2) and NH(3) from urea (urease route): step 1/1. This chain is Urease subunit alpha 2, found in Pseudomonas syringae pv. syringae (strain B728a).